The chain runs to 481 residues: Histidine--tRNA ligase, cytoplasmic (481 aa).

The segment at 1 to 48 (MSEPVVDNVTNKVEKMEVKEKTSAPPKEKKEKKSNKVQLKTPKGTQDY) is disordered. The span at 12–31 (KVEKMEVKEKTSAPPKEKKE) shows a compositional bias: basic and acidic residues.

The protein belongs to the class-II aminoacyl-tRNA synthetase family.

The protein resides in the cytoplasm. It carries out the reaction tRNA(His) + L-histidine + ATP = L-histidyl-tRNA(His) + AMP + diphosphate + H(+). This is Histidine--tRNA ligase, cytoplasmic (hisS) from Dictyostelium discoideum (Social amoeba).